The primary structure comprises 518 residues: Laccase (518 aa).

Residues 1 to 21 (MSRFQSLLSFVLVSLAAVANA) form the signal peptide. 2 consecutive Plastocyanin-like domains span residues 23–148 (IGPV…FVVY) and 160–302 (IDND…ILRY). 2 N-linked (GlcNAc...) asparagine glycosylation sites follow: Asn-72 and Asn-75. Residues His-85, His-87, His-130, and His-132 each contribute to the Cu cation site. 2 cysteine pairs are disulfide-bonded: Cys-106–Cys-507 and Cys-138–Cys-226. The N-linked (GlcNAc...) asparagine glycan is linked to Asn-229. The segment at 308-330 (VEPTTTQTTSTKPLNEADLHPLT) is disordered. N-linked (GlcNAc...) asparagine glycosylation is found at Asn-354, Asn-362, and Asn-398. The region spanning 369–489 (SVPVLLQILS…AGFAVVLAED (121 aa)) is the Plastocyanin-like 3 domain. His-416, His-419, His-421, His-471, Cys-472, His-473, and His-477 together coordinate Cu cation.

Belongs to the multicopper oxidase family. The cofactor is Cu cation.

Its subcellular location is the secreted. It carries out the reaction 4 hydroquinone + O2 = 4 benzosemiquinone + 2 H2O. Its function is as follows. Lignin degradation and detoxification of lignin-derived products. Cleaves the C-C and C-O bonds of some phenolic lignin model compounds (such as O- and P-quinols, aminophenols and phenylenediamine). May also be involved in synthesis of phenoxazinone pigments. The protein is Laccase (LCC3-1) of Pycnoporus cinnabarinus (Cinnabar-red polypore).